We begin with the raw amino-acid sequence, 487 residues long: N-succinylglutamate 5-semialdehyde dehydrogenase (487 aa).

221 to 226 (GSSDTG) is an NAD(+) binding site. Residues Glu244 and Cys278 contribute to the active site.

This sequence belongs to the aldehyde dehydrogenase family. AstD subfamily.

It catalyses the reaction N-succinyl-L-glutamate 5-semialdehyde + NAD(+) + H2O = N-succinyl-L-glutamate + NADH + 2 H(+). It participates in amino-acid degradation; L-arginine degradation via AST pathway; L-glutamate and succinate from L-arginine: step 4/5. Its function is as follows. Catalyzes the NAD-dependent reduction of succinylglutamate semialdehyde into succinylglutamate. This is N-succinylglutamate 5-semialdehyde dehydrogenase from Burkholderia orbicola (strain MC0-3).